The chain runs to 846 residues: Circadian locomoter output cycles protein kaput (846 aa).

Residues 32-47 (DKAKRVSRNKSEKKRR) carry the Nuclear localization signal motif. Positions 34-84 (AKRVSRNKSEKKRRDQFNVLIKELGSMLPGNARKMDKSTVLQKSIDFLRKH) constitute a bHLH domain. Residues S38 and S42 each carry the phosphoserine modification. A Glycyl lysine isopeptide (Lys-Gly) (interchain with G-Cter in SUMO1) cross-link involves residue K67. PAS domains follow at residues 107–177 (NEEF…LLES) and 262–332 (FIKE…MQYG). A PAC domain is found at 336–379 (SCYYRFLTKGQQWIWLQTHYYITYHQWNSRPEFIVCTHTVVSYA). An interaction with NR3C1 region spans residues 371-845 (CTHTVVSYAE…SLPDPSKVQP (475 aa)). Disordered regions lie at residues 392-411 (EESL…SDNR) and 420-495 (ALER…SSLT). A Phosphoserine modification is found at S408. S427 carries the post-translational modification Phosphoserine; by GSK3-beta. Position 431 is a phosphoserine (S431). A compositionally biased stretch (polar residues) spans 447–463 (DPSSTPTKIPTDTSTPP). Residues 450–570 (STPTKIPTDT…QGLQMFLQQS (121 aa)) are interaction with SIRT1. Phosphothreonine; by CDK5 occurs at positions 451 and 461. A compositionally biased stretch (low complexity) spans 478-493 (SSFSSQSINSQSVGSS). The interval 514-564 (FQFSAQLGAMQHLKDQLEQRTRMIEANIHRQQEELRKIQEQLQMVHGQGLQ) is implicated in the circadian rhythmicity. 2 stretches are compositionally biased toward low complexity: residues 624 to 637 (QQQT…QSQQ) and 644 to 654 (SQQTSLPSQTQ). 3 disordered regions span residues 624–654 (QQQT…SQTQ), 764–783 (EQQL…QPPQ), and 811–846 (STFP…VQPQ). Residues 811–829 (STFPQSHHQQHQSQQQQQL) show a composition bias toward low complexity. K842 participates in a covalent cross-link: Glycyl lysine isopeptide (Lys-Gly) (interchain with G-Cter in SUMO1).

As to quaternary structure, component of the circadian clock oscillator which includes the CRY proteins, CLOCK or NPAS2, BMAL1 or BMAL2, CSNK1D and/or CSNK1E, TIMELESS and the PER proteins. Interacts with KMT2A; in a circadian manner. Forms a heterodimer with BMAL1. The CLOCK-BMAL1 heterodimer is required for E-box-dependent transactivation, for CLOCK nuclear translocation and degradation, and for phosphorylation of both CLOCK and BMAL1. Interacts with NR3C1 in a ligand-dependent fashion. Interacts with ESR1 and estrogen stimulates this interaction. Interacts with the complex p35/CDK5. Interacts with RELA/p65. Interacts with KAT2B, CREBBP, EP300. Interacts with ID1 and ID3. Interacts with ID2. Interacts with MTA1. Interacts with OGA. Interacts with SIRT1. Interacts with CIPC. Interacts with EZH2. Interacts with EIF4E, PIWIL1 and DDX4. Interacts with PER2 and CRY1 and the interaction with PER and CRY proteins requires translocation to the nucleus. Interacts with PER1 and CRY2. Interaction of the CLOCK-BMAL1 heterodimer with PER or CRY inhibits transcription activation. Interaction of the CLOCK-BMAL1 with CRY1 is independent of DNA but with PER2 is off DNA. The CLOCK-BMAL1 heterodimer interacts with GSK3B. Interacts with KDM5A. Interacts with MYBBP1A. Interacts with THRAP3. Interacts with MED1; this interaction requires the presence of THRAP3. Interacts with NCOA2. The CLOCK-BMAL1 heterodimer interacts with PASD1. Interacts with ASS1 and IMPDH2; in a circadian manner. Interacts with NDUFA9. Interacts with PIWIL2 (via PIWI domain). Interacts with HNF4A. Post-translationally, ubiquitinated, leading to its proteasomal degradation. O-glycosylated; contains O-GlcNAc. O-glycosylation by OGT prevents protein degradation by inhibiting ubiquitination. It also stabilizes the CLOCK-BMAL1 heterodimer thereby increasing CLOCK-BMAL1-mediated transcriptional activation of PER1/2/3 and CRY1/2. In terms of processing, phosphorylation is dependent on the CLOCK-BMAL1 heterodimer formation. Phosphorylation enhances the transcriptional activity, alters the subcellular localization and decreases the stability of the heterodimer by promoting its degradation. Phosphorylation shows circadian variations in the liver. May be phosphorylated by CSNK1D and CKSN1E. Post-translationally, sumoylation enhances its transcriptional activity and interaction with ESR1, resulting in up-regulation of ESR1 activity. Estrogen stimulates sumoylation. Desumoylation by SENP1 negatively regulates its transcriptional activity. Sumoylation stimulates cell proliferation and increases the proportion of S phase cells in breast cancer cell lines. Undergoes lysosome-mediated degradation in a time-dependent manner in the liver. In terms of tissue distribution, hair follicles (at protein level). Expressed in all tissues examined including spleen, thymus, prostate, testis, ovary, small intestine, colon, leukocytes, heart, brain, placenta, lung, liver, skeletal muscle, kidney and pancreas. Highest levels in testis and skeletal muscle. Low levels in thymus, lung and liver. Expressed in all brain regions with highest levels in cerebellum. Highly expressed in the suprachiasmatic nucleus (SCN).

Its subcellular location is the nucleus. The protein localises to the cytoplasm. The protein resides in the cytosol. It catalyses the reaction L-lysyl-[protein] + acetyl-CoA = N(6)-acetyl-L-lysyl-[protein] + CoA + H(+). There is conflicting data about the effect of NAD cofactors on activity. PubMed:11441146 suggests that the redox state of the cell can modulate the transcriptional activity of the CLOCK-BMAL1 heterodimer; NADH and NADPH enhance the DNA-binding activity of the heterodimer. PubMed:23229515 reports that NADH and NADPH have no significant effect on DNA-binding activity of the CLOCK-BMAL1 heterodimer. Functionally, transcriptional activator which forms a core component of the circadian clock. The circadian clock, an internal time-keeping system, regulates various physiological processes through the generation of approximately 24 hour circadian rhythms in gene expression, which are translated into rhythms in metabolism and behavior. It is derived from the Latin roots 'circa' (about) and 'diem' (day) and acts as an important regulator of a wide array of physiological functions including metabolism, sleep, body temperature, blood pressure, endocrine, immune, cardiovascular, and renal function. Consists of two major components: the central clock, residing in the suprachiasmatic nucleus (SCN) of the brain, and the peripheral clocks that are present in nearly every tissue and organ system. Both the central and peripheral clocks can be reset by environmental cues, also known as Zeitgebers (German for 'timegivers'). The predominant Zeitgeber for the central clock is light, which is sensed by retina and signals directly to the SCN. The central clock entrains the peripheral clocks through neuronal and hormonal signals, body temperature and feeding-related cues, aligning all clocks with the external light/dark cycle. Circadian rhythms allow an organism to achieve temporal homeostasis with its environment at the molecular level by regulating gene expression to create a peak of protein expression once every 24 hours to control when a particular physiological process is most active with respect to the solar day. Transcription and translation of core clock components (CLOCK, NPAS2, BMAL1, BMAL2, PER1, PER2, PER3, CRY1 and CRY2) plays a critical role in rhythm generation, whereas delays imposed by post-translational modifications (PTMs) are important for determining the period (tau) of the rhythms (tau refers to the period of a rhythm and is the length, in time, of one complete cycle). A diurnal rhythm is synchronized with the day/night cycle, while the ultradian and infradian rhythms have a period shorter and longer than 24 hours, respectively. Disruptions in the circadian rhythms contribute to the pathology of cardiovascular diseases, cancer, metabolic syndromes and aging. A transcription/translation feedback loop (TTFL) forms the core of the molecular circadian clock mechanism. Transcription factors, CLOCK or NPAS2 and BMAL1 or BMAL2, form the positive limb of the feedback loop, act in the form of a heterodimer and activate the transcription of core clock genes and clock-controlled genes (involved in key metabolic processes), harboring E-box elements (5'-CACGTG-3') within their promoters. The core clock genes: PER1/2/3 and CRY1/2 which are transcriptional repressors form the negative limb of the feedback loop and interact with the CLOCK|NPAS2-BMAL1|BMAL2 heterodimer inhibiting its activity and thereby negatively regulating their own expression. This heterodimer also activates nuclear receptors NR1D1/2 and RORA/B/G, which form a second feedback loop and which activate and repress BMAL1 transcription, respectively. Regulates the circadian expression of ICAM1, VCAM1, CCL2, THPO and MPL and also acts as an enhancer of the transactivation potential of NF-kappaB. Plays an important role in the homeostatic regulation of sleep. The CLOCK-BMAL1 heterodimer regulates the circadian expression of SERPINE1/PAI1, VWF, B3, CCRN4L/NOC, NAMPT, DBP, MYOD1, PPARGC1A, PPARGC1B, SIRT1, GYS2, F7, NGFR, GNRHR, BHLHE40/DEC1, ATF4, MTA1, KLF10 and also genes implicated in glucose and lipid metabolism. Promotes rhythmic chromatin opening, regulating the DNA accessibility of other transcription factors. The CLOCK-BMAL2 heterodimer activates the transcription of SERPINE1/PAI1 and BHLHE40/DEC1. The preferred binding motif for the CLOCK-BMAL1 heterodimer is 5'-CACGTGA-3', which contains a flanking adenine nucleotide at the 3-prime end of the canonical 6-nucleotide E-box sequence. CLOCK specifically binds to the half-site 5'-CAC-3', while BMAL1 binds to the half-site 5'-GTGA-3'. The CLOCK-BMAL1 heterodimer also recognizes the non-canonical E-box motifs 5'-AACGTGA-3' and 5'-CATGTGA-3'. CLOCK has an intrinsic acetyltransferase activity, which enables circadian chromatin remodeling by acetylating histones and nonhistone proteins, including its own partner BMAL1. Represses glucocorticoid receptor NR3C1/GR-induced transcriptional activity by reducing the association of NR3C1/GR to glucocorticoid response elements (GREs) via the acetylation of multiple lysine residues located in its hinge region. The acetyltransferase activity of CLOCK is as important as its transcription activity in circadian control. Acetylates metabolic enzymes IMPDH2 and NDUFA9 in a circadian manner. Facilitated by BMAL1, rhythmically interacts and acetylates argininosuccinate synthase 1 (ASS1) leading to enzymatic inhibition of ASS1 as well as the circadian oscillation of arginine biosynthesis and subsequent ureagenesis. Drives the circadian rhythm of blood pressure through transcriptional activation of ATP1B1. The sequence is that of Circadian locomoter output cycles protein kaput (CLOCK) from Homo sapiens (Human).